The sequence spans 253 residues: Beta-crystallin B1 (253 aa).

The segment covering 1-18 (MSQPAAKASATAAVNPGP) has biased composition (low complexity). The tract at residues 1–53 (MSQPAAKASATAAVNPGPDGKGKAGPPPGPAPGSGPAPAPAPAPAQPAPAAKA) is disordered. At Ser-2 the chain carries N-acetylserine. The segment at 2–59 (SQPAAKASATAAVNPGPDGKGKAGPPPGPAPGSGPAPAPAPAPAQPAPAAKAELPPGS) is N-terminal arm. Pro residues predominate over residues 25–47 (GPPPGPAPGSGPAPAPAPAPAQP). Beta/gamma crystallin 'Greek key' domains follow at residues 60–99 (YKLV…IVTS) and 100–144 (GPWV…RPIK). The connecting peptide stretch occupies residues 145–149 (MDAQE). Beta/gamma crystallin 'Greek key' domains are found at residues 150-191 (HKLC…RVSS) and 192-234 (GTWV…RRLR). Positions 236–253 (RQWHREGCFPVLAAEPPK) are C-terminal arm.

Belongs to the beta/gamma-crystallin family. As to quaternary structure, homo/heterodimer, or complexes of higher-order. The structure of beta-crystallin oligomers seems to be stabilized through interactions between the N-terminal arms. Specific cleavages in the N-terminal arm occur during lens maturation and give rise to truncated forms, leading to impaired oligomerization and protein insolubilization.

Crystallins are the dominant structural components of the vertebrate eye lens. The chain is Beta-crystallin B1 (CRYBB1) from Bos taurus (Bovine).